Here is a 426-residue protein sequence, read N- to C-terminus: Protein EARLY STARVATION 1, chloroplastic (426 aa).

Residues 1 to 58 (MSEMAASSAISLLDIKLRRFGVGASNHELRLTKWFKGDQAGAPTRRFTCFADMLAPIR) constitute a chloroplast transit peptide. Disordered stretches follow at residues 106–127 (CTPRLTGPQSRDTPPKRDTGIA) and 396–426 (QPRERPPGVYPNLEFGPSPPPEPDLPPDQPQ). Over residues 118-127 (TPPKRDTGIA) the composition is skewed to basic and acidic residues. The span at 412-426 (PSPPPEPDLPPDQPQ) shows a compositional bias: pro residues.

The protein belongs to the ESV1 family.

The protein localises to the plastid. It localises to the chloroplast stroma. The protein resides in the plastid stroma. Its function is as follows. Binds preferentially to highly ordered alpha-glucans, such as starch and crystalline maltodextrins. Involved in the organization of the starch granule matrix, thus influencing starch turnover by modulating the accessibility of starch polymers to modifying and degrading enzymes involved in phosphorylation, hydrolyzes and synthesis, including starch synthases (SSI and SSIII), starch phosphorylases (PHS1), isoamylase, beta-amylase, glucan water dikinase (GWD) and phosphoglucan water dikinase (PWD). Prevents GWD- and PWD-mediated starch phosphorylation, and subsequent degradation. Required for the control of starch degradation in leaves and starch distribution in nonphotosynthetic parts (e.g. cells immediately adjacent to veins, columella cells of root caps, stems, flowers and siliques) by limiting the hasty depletion of starch reserves during the night. Promotes gravitropic responses, negative in shoots but positive in roots, by maintaining starch granules (statoliths) accumulation in hypocotyls and roots columella, especially in dark conditions and in the endodermis, where starch is formed from transported glucose-6-phosphates. In Arabidopsis thaliana (Mouse-ear cress), this protein is Protein EARLY STARVATION 1, chloroplastic.